The sequence spans 509 residues: MAAIGVHLGCTSACVAVYKDGRADVVANDAGDRVTPAIVAYSKNEEVVGLAAKQSRIRNISNTVMKVKQILGRSSDDPQSRKYITESKCLVIEKNGKLLYEIDTGEEKKFVSPEDVARLIFSKMKETAHSVLGSDANDVVITVPFDFGEKQKSALGEAARAAGFNVLRLIHEPSAALLAYGIGQDSPTGKSNILVFKLGGTSLSISVMEVNSGIYRVLSTNTDNNIGGTHFTETLAQYLASEFQRSFRHDVRGNARAMMKLMNGADTAKHSLSTLGSANCFLDSLYEGQDFDCNVSRARFELLCSPLFNKCIEAIREVLEQSGFTADDINKVVLCGGSSRIPRLQQMIRDLFPAVELLNSIPPDEVIPIGAAIEAGILIGKESLSVEDALQIECSAKDILVKGVDESGANSFKVLFPSGTPLPARRQHTLQAPGSISSVCLELYESEGKNSAKVENKFAQVVLQDLDKKENGLRDILAVLTMKRDGSLHVTCTDQETGKCEAITIEVAS.

Belongs to the heat shock protein 70 family. Component of ribosome-associated complex (RAC), a heterodimer composed of Hsp70/DnaK-type chaperone HSPA14 and Hsp40/DnaJ-type chaperone DNAJC2.

The protein resides in the cytoplasm. It localises to the cytosol. In terms of biological role, component of the ribosome-associated complex (RAC), a complex involved in folding or maintaining nascent polypeptides in a folding-competent state. In the RAC complex, binds to the nascent polypeptide chain, while DNAJC2 stimulates its ATPase activity. The polypeptide is Heat shock 70 kDa protein 14 (HSPA14) (Bos taurus (Bovine)).